The primary structure comprises 110 residues: Tyrosine-protein phosphatase 3 (110 aa).

Residues Gln-1–Val-110 enclose the Tyrosine-protein phosphatase domain. Asp-80 is a substrate binding site.

It belongs to the protein-tyrosine phosphatase family.

It carries out the reaction O-phospho-L-tyrosyl-[protein] + H2O = L-tyrosyl-[protein] + phosphate. This is Tyrosine-protein phosphatase 3 (STY-3) from Styela plicata (Wrinkled sea squirt).